Reading from the N-terminus, the 553-residue chain is ATP synthase F(1) complex subunit alpha, mitochondrial (553 aa).

Residues 1-43 (MLSVRVAAAVVRALPRRAGLVSRNALGSSFIAARNFHASNTHL) constitute a mitochondrion transit peptide. 2 positions are modified to phosphoserine: serine 53 and serine 65. Serine 76 carries the post-translational modification Phosphoserine; alternate. Residue serine 76 is glycosylated (O-linked (GlcNAc) serine; alternate). Serine 106 carries the post-translational modification Phosphoserine. Lysine 123, lysine 126, and lysine 132 each carry N6-acetyllysine. At threonine 134 the chain carries Phosphothreonine. The residue at position 161 (lysine 161) is an N6-acetyllysine; alternate. The residue at position 161 (lysine 161) is an N6-succinyllysine; alternate. Serine 166 carries the post-translational modification Phosphoserine. Lysine 167 is modified (N6-acetyllysine; alternate). The residue at position 167 (lysine 167) is an N6-succinyllysine; alternate. The residue at position 184 (serine 184) is a Phosphoserine. Arginine 204 carries the post-translational modification Omega-N-methylarginine. ATP-binding residues include glutamine 215, glycine 217, lysine 218, threonine 219, and serine 220. Position 219 (threonine 219) interacts with Mg(2+). N6-acetyllysine; alternate occurs at positions 230 and 239. Lysine 230 and lysine 239 each carry N6-succinyllysine; alternate. Lysine 240 bears the N6-acetyllysine mark. An N6-acetyllysine; alternate mark is found at lysine 261 and lysine 305. Lysine 261 and lysine 305 each carry N6-succinyllysine; alternate. Aspartate 312 contributes to the Mg(2+) binding site. Position 427 is an N6-acetyllysine; alternate (lysine 427). Lysine 427 is subject to N6-succinyllysine; alternate. Lysine 434 carries the N6-acetyllysine modification. 2 residues coordinate ATP: glutamine 473 and glutamine 475. Lysine 498, lysine 506, lysine 531, and lysine 539 each carry N6-acetyllysine; alternate. N6-succinyllysine; alternate occurs at positions 498, 506, 531, and 539. Lysine 541 bears the N6-acetyllysine mark.

It belongs to the ATPase alpha/beta chains family. As to quaternary structure, homotrimer. Component of the ATP synthase complex composed at least of ATP5F1A/subunit alpha, ATP5F1B/subunit beta, ATP5MC1/subunit c (homooctomer), MT-ATP6/subunit a, MT-ATP8/subunit 8, ATP5ME/subunit e, ATP5MF/subunit f, ATP5MG/subunit g, ATP5MK/subunit k, ATP5MJ/subunit j, ATP5F1C/subunit gamma, ATP5F1D/subunit delta, ATP5F1E/subunit epsilon, ATP5PF/subunit F6, ATP5PB/subunit b, ATP5PD/subunit d, ATP5PO/subunit OSCP. ATP synthase complex consists of a soluble F(1) head domain (subunits alpha(3) and beta(3)) - the catalytic core - and a membrane F(0) domain - the membrane proton channel (subunits c, a, 8, e, f, g, k and j). These two domains are linked by a central stalk (subunits gamma, delta, and epsilon) rotating inside the F1 region and a stationary peripheral stalk (subunits F6, b, d, and OSCP). Interacts with ATPAF2. Interacts with HRG; the interaction occurs on the surface of T-cells and alters the cell morphology when associated with concanavalin (in vitro). Interacts with PLG (angiostatin peptide); the interaction inhibits most of the angiogenic properties of angiostatin. Interacts with BLOC1S1. Interacts with BCL2L1 isoform BCL-X(L); the interaction mediates the association of BCL2L1 isoform BCL-X(L) with the mitochondrial membrane F(1)F(0) ATP synthase and enhances neurons metabolic efficiency. Interacts with CLN5 and PPT1. Interacts with S100A1; this interaction increases F1-ATPase activity. Interacts with ABCB7; this interaction allows the regulation of cellular iron homeostasis and cellular reactive oxygen species (ROS) levels in cardiomyocytes. In terms of processing, acetylated on lysine residues. BLOC1S1 is required for acetylation.

It is found in the mitochondrion inner membrane. It localises to the cell membrane. In terms of biological role, subunit alpha, of the mitochondrial membrane ATP synthase complex (F(1)F(0) ATP synthase or Complex V) that produces ATP from ADP in the presence of a proton gradient across the membrane which is generated by electron transport complexes of the respiratory chain. ATP synthase complex consist of a soluble F(1) head domain - the catalytic core - and a membrane F(1) domain - the membrane proton channel. These two domains are linked by a central stalk rotating inside the F(1) region and a stationary peripheral stalk. During catalysis, ATP synthesis in the catalytic domain of F(1) is coupled via a rotary mechanism of the central stalk subunits to proton translocation. In vivo, can only synthesize ATP although its ATP hydrolase activity can be activated artificially in vitro. With the catalytic subunit beta (ATP5F1B), forms the catalytic core in the F(1) domain. Subunit alpha does not bear the catalytic high-affinity ATP-binding sites. The polypeptide is ATP synthase F(1) complex subunit alpha, mitochondrial (Pongo abelii (Sumatran orangutan)).